The sequence spans 334 residues: Replication factor C subunit 4 (334 aa).

55–62 provides a ligand contact to ATP; sequence GPPGTGKT.

The protein belongs to the activator 1 small subunits family. In terms of assembly, heteropentamer of various rfc subunits that forms a complex (RFC) with PCNA in the presence of ATP.

Its subcellular location is the nucleus. The elongation of primed DNA templates by DNA polymerase delta and epsilon requires the action of the accessory proteins PCNA and activator 1. This subunit may be involved in the elongation of the multiprimed DNA template. The chain is Replication factor C subunit 4 (rfc-4) from Caenorhabditis elegans.